We begin with the raw amino-acid sequence, 637 residues long: Threonine--tRNA ligase (637 aa).

The TGS domain maps to 1–61; that stretch reads MPNVKLPDGN…KEDCSLIIVT (61 aa). The catalytic stretch occupies residues 242–533; it reads DHRKLGKALD…LIEHYAGKLP (292 aa). Residues C333, H384, and H510 each contribute to the Zn(2+) site.

This sequence belongs to the class-II aminoacyl-tRNA synthetase family. As to quaternary structure, homodimer. Zn(2+) is required as a cofactor.

The protein localises to the cytoplasm. The enzyme catalyses tRNA(Thr) + L-threonine + ATP = L-threonyl-tRNA(Thr) + AMP + diphosphate + H(+). Its function is as follows. Catalyzes the attachment of threonine to tRNA(Thr) in a two-step reaction: L-threonine is first activated by ATP to form Thr-AMP and then transferred to the acceptor end of tRNA(Thr). Also edits incorrectly charged L-seryl-tRNA(Thr). This chain is Threonine--tRNA ligase, found in Legionella pneumophila subsp. pneumophila (strain Philadelphia 1 / ATCC 33152 / DSM 7513).